A 384-amino-acid chain; its full sequence is Probable intron-encoded endonuclease Cox1-I1b (384 aa).

This sequence belongs to the LAGLIDADG endonuclease family.

It localises to the mitochondrion. Functionally, probable mitochondrial DNA endonuclease involved in intron homing. The chain is Probable intron-encoded endonuclease Cox1-I1b (cox1-I1b) from Schizosaccharomyces pombe (strain 972 / ATCC 24843) (Fission yeast).